Reading from the N-terminus, the 412-residue chain is Eukaryotic initiation factor 4A-2 (412 aa).

The residue at position 2 (A2) is an N-acetylalanine. Positions 39–67 (ESFDAMGLQENLLRGIYAYGFEKPSAIQQ) match the Q motif motif. The Helicase ATP-binding domain maps to 70–240 (IVPFCKGLDV…RKFMSKPVRI (171 aa)). 83–90 (AQSGTGKT) contacts ATP. Phosphothreonine is present on T145. The DEAD box signature appears at 188–191 (DEAD). One can recognise a Helicase C-terminal domain in the interval 251–412 (GIKQFYVNVE…ELPSNVADLL (162 aa)).

The protein belongs to the DEAD box helicase family. eIF4A subfamily. EIF4F is a multi-subunit complex, the composition of which varies with external and internal environmental conditions. It is composed of at least EIF4A, EIF4E and EIF4G. As to expression, ubiquitous. Preferentially expressed in flowers, young leaves and roots.

It localises to the cytoplasm. The enzyme catalyses ATP + H2O = ADP + phosphate + H(+). Its function is as follows. ATP-dependent RNA helicase which is a subunit of the eIF4F complex involved in cap recognition and is required for mRNA binding to ribosome. In the current model of translation initiation, eIF4A unwinds RNA secondary structures in the 5'-UTR of mRNAs which is necessary to allow efficient binding of the small ribosomal subunit, and subsequent scanning for the initiator codon. The polypeptide is Eukaryotic initiation factor 4A-2 (TIF4A-2) (Arabidopsis thaliana (Mouse-ear cress)).